We begin with the raw amino-acid sequence, 142 residues long: MAKKVQAYVKLQVAAGMANPSPPVGPALGQQGVNIMEFCKAFNAKTDSMEKGLPIPVVITVYADRSFTFVTKTPPAAVLLKKAAGIKSGSGKPNKDKVGTITRAQLQEIAQTKAADMTGADIEAMTRSIEGTARSMGLVVED.

Belongs to the universal ribosomal protein uL11 family. Part of the ribosomal stalk of the 50S ribosomal subunit. Interacts with L10 and the large rRNA to form the base of the stalk. L10 forms an elongated spine to which L12 dimers bind in a sequential fashion forming a multimeric L10(L12)X complex. Post-translationally, one or more lysine residues are methylated.

Forms part of the ribosomal stalk which helps the ribosome interact with GTP-bound translation factors. The polypeptide is Large ribosomal subunit protein uL11 (Cronobacter sakazakii (strain ATCC BAA-894) (Enterobacter sakazakii)).